A 476-amino-acid polypeptide reads, in one-letter code: Ribulose bisphosphate carboxylase large chain (476 aa).

Residues Asn-124 and Thr-174 each contribute to the substrate site. Residue Lys-176 is the Proton acceptor of the active site. Residue Lys-178 participates in substrate binding. The Mg(2+) site is built by Lys-202, Asp-204, and Glu-205. Lys-202 bears the N6-carboxylysine mark. The active-site Proton acceptor is His-295. Positions 296, 328, and 380 each coordinate substrate.

The protein belongs to the RuBisCO large chain family. Type I subfamily. As to quaternary structure, heterohexadecamer of 8 large chains and 8 small chains; disulfide-linked. The disulfide link is formed within the large subunit homodimers. It depends on Mg(2+) as a cofactor. The disulfide bond which can form in the large chain dimeric partners within the hexadecamer appears to be associated with oxidative stress and protein turnover.

The protein resides in the carboxysome. It catalyses the reaction 2 (2R)-3-phosphoglycerate + 2 H(+) = D-ribulose 1,5-bisphosphate + CO2 + H2O. It carries out the reaction D-ribulose 1,5-bisphosphate + O2 = 2-phosphoglycolate + (2R)-3-phosphoglycerate + 2 H(+). Its function is as follows. RuBisCO catalyzes two reactions: the carboxylation of D-ribulose 1,5-bisphosphate, the primary event in carbon dioxide fixation, as well as the oxidative fragmentation of the pentose substrate in the photorespiration process. Both reactions occur simultaneously and in competition at the same active site. The chain is Ribulose bisphosphate carboxylase large chain from Trichodesmium erythraeum (strain IMS101).